We begin with the raw amino-acid sequence, 479 residues long: 3-phytase B (479 aa).

The N-terminal stretch at 1–19 (MPRTSLLTLACALATGASA) is a signal peptide. 5 disulfides stabilise this stretch: Cys-71–Cys-387, Cys-128–Cys-472, Cys-216–Cys-441, Cys-225–Cys-298, and Cys-413–Cys-421. Residue His-82 is the Nucleophile of the active site. Asn-191 carries an N-linked (GlcNAc...) asparagine glycan. Asn-315 is a glycosylation site (N-linked (GlcNAc...) asparagine). Catalysis depends on Asp-338, which acts as the Proton donor. N-linked (GlcNAc...) asparagine glycosylation is present at Asn-458.

Belongs to the histidine acid phosphatase family. As to quaternary structure, homodimer.

The catalysed reaction is 1D-myo-inositol hexakisphosphate + H2O = 1D-myo-inositol 1,2,4,5,6-pentakisphosphate + phosphate. In terms of biological role, catalyzes the hydrolysis of inorganic orthophosphate from phytate. In Aspergillus awamori (Black koji mold), this protein is 3-phytase B (phyB).